We begin with the raw amino-acid sequence, 416 residues long: Actin-like protein 9 (416 aa).

Residues 1–40 (MDASRPKSSESQSSLEAPRPGPNPSPNVVNKPLQRDSPGM) form a disordered region.

This sequence belongs to the actin family. Interacts with ACTL7A. Testis-specific.

Its subcellular location is the cytoplasmic vesicle. The protein resides in the secretory vesicle. The protein localises to the acrosome. It is found in the cytoplasm. It localises to the cytoskeleton. Its subcellular location is the perinuclear theca. Its function is as follows. Testis-specic protein that plays an important role in fusion of proacrosomal vesicles and perinuclear theca formation. The polypeptide is Actin-like protein 9 (Homo sapiens (Human)).